Consider the following 33-residue polypeptide: Tail virion protein G9P (33 aa).

Residues V5 to F25 traverse the membrane as a helical segment.

The protein belongs to the inovirus G9P protein family.

The protein localises to the virion. The protein resides in the host membrane. Its function is as follows. May initiate with G7P the virion concomitant assembly-budding process, by interacting with the packaging signal of the viral genome. The assembly-budding takes place at the host inner membrane. In turn, G7P and G9P are present at the end of the filamentous virion that emerges first from the bacterial host. In Salmonella phage IKe (Bacteriophage IKe), this protein is Tail virion protein G9P (IX).